The sequence spans 252 residues: Triosephosphate isomerase (252 aa).

Residue 10–12 (NWK) coordinates substrate. Histidine 96 (electrophile) is an active-site residue. The active-site Proton acceptor is glutamate 168. Substrate contacts are provided by residues glycine 174, serine 214, and 235–236 (GG).

It belongs to the triosephosphate isomerase family. In terms of assembly, homodimer.

It localises to the cytoplasm. The catalysed reaction is D-glyceraldehyde 3-phosphate = dihydroxyacetone phosphate. Its pathway is carbohydrate biosynthesis; gluconeogenesis. It participates in carbohydrate degradation; glycolysis; D-glyceraldehyde 3-phosphate from glycerone phosphate: step 1/1. In terms of biological role, involved in the gluconeogenesis. Catalyzes stereospecifically the conversion of dihydroxyacetone phosphate (DHAP) to D-glyceraldehyde-3-phosphate (G3P). This chain is Triosephosphate isomerase, found in Streptococcus pyogenes serotype M2 (strain MGAS10270).